The chain runs to 714 residues: Fatty acid oxidation complex subunit alpha (714 aa).

The enoyl-CoA hydratase stretch occupies residues 1-190; it reads MDTVSAFKLE…KAGLVDEVVP (190 aa). The segment at 306–714 is 3-hydroxyacyl-CoA dehydrogenase; the sequence is GPLTSIAVLG…TFWPADERLT (409 aa).

It in the N-terminal section; belongs to the enoyl-CoA hydratase/isomerase family. In the central section; belongs to the 3-hydroxyacyl-CoA dehydrogenase family. In terms of assembly, heterotetramer of two alpha chains (FadJ) and two beta chains (FadI).

The protein resides in the cytoplasm. It catalyses the reaction a (3S)-3-hydroxyacyl-CoA = a (2E)-enoyl-CoA + H2O. It carries out the reaction a 4-saturated-(3S)-3-hydroxyacyl-CoA = a (3E)-enoyl-CoA + H2O. The catalysed reaction is a (3S)-3-hydroxyacyl-CoA + NAD(+) = a 3-oxoacyl-CoA + NADH + H(+). The enzyme catalyses (3S)-3-hydroxybutanoyl-CoA = (3R)-3-hydroxybutanoyl-CoA. Its pathway is lipid metabolism; fatty acid beta-oxidation. Functionally, catalyzes the formation of a hydroxyacyl-CoA by addition of water on enoyl-CoA. Also exhibits 3-hydroxyacyl-CoA epimerase and 3-hydroxyacyl-CoA dehydrogenase activities. The protein is Fatty acid oxidation complex subunit alpha of Klebsiella pneumoniae (strain 342).